The chain runs to 488 residues: Bifunctional protein GlmU (488 aa).

Positions 1-237 are pyrophosphorylase; the sequence is MPRTRTPLAA…AEEASGVNDR (237 aa). Residues 13-16, lysine 27, glutamine 82, 87-88, 110-112, glycine 149, glutamate 164, asparagine 179, and asparagine 235 each bind UDP-N-acetyl-alpha-D-glucosamine; these read LAAG, GT, and SGD. Aspartate 112 contacts Mg(2+). Asparagine 235 is a Mg(2+) binding site. The segment at 238–258 is linker; sequence IELARANRVMVGRLAEAFMRA. The segment at 259 to 488 is N-acetyltransferase; it reads GVTIEDPARF…KGRPAARRAS (230 aa). 2 residues coordinate UDP-N-acetyl-alpha-D-glucosamine: arginine 341 and lysine 359. Histidine 371 (proton acceptor) is an active-site residue. Residues tyrosine 374 and asparagine 385 each coordinate UDP-N-acetyl-alpha-D-glucosamine. Acetyl-CoA is bound by residues alanine 388, 394–395, serine 413, alanine 431, and arginine 448; that span reads NY. The disordered stretch occupies residues 459–488; it reads AQRQAEKQMKGTATGPAPARKGRPAARRAS. The segment covering 478–488 has biased composition (basic residues); that stretch reads RKGRPAARRAS.

The protein in the N-terminal section; belongs to the N-acetylglucosamine-1-phosphate uridyltransferase family. In the C-terminal section; belongs to the transferase hexapeptide repeat family. In terms of assembly, homotrimer. The cofactor is Mg(2+).

It is found in the cytoplasm. It catalyses the reaction alpha-D-glucosamine 1-phosphate + acetyl-CoA = N-acetyl-alpha-D-glucosamine 1-phosphate + CoA + H(+). It carries out the reaction N-acetyl-alpha-D-glucosamine 1-phosphate + UTP + H(+) = UDP-N-acetyl-alpha-D-glucosamine + diphosphate. It participates in nucleotide-sugar biosynthesis; UDP-N-acetyl-alpha-D-glucosamine biosynthesis; N-acetyl-alpha-D-glucosamine 1-phosphate from alpha-D-glucosamine 6-phosphate (route II): step 2/2. Its pathway is nucleotide-sugar biosynthesis; UDP-N-acetyl-alpha-D-glucosamine biosynthesis; UDP-N-acetyl-alpha-D-glucosamine from N-acetyl-alpha-D-glucosamine 1-phosphate: step 1/1. It functions in the pathway bacterial outer membrane biogenesis; LPS lipid A biosynthesis. Functionally, catalyzes the last two sequential reactions in the de novo biosynthetic pathway for UDP-N-acetylglucosamine (UDP-GlcNAc). The C-terminal domain catalyzes the transfer of acetyl group from acetyl coenzyme A to glucosamine-1-phosphate (GlcN-1-P) to produce N-acetylglucosamine-1-phosphate (GlcNAc-1-P), which is converted into UDP-GlcNAc by the transfer of uridine 5-monophosphate (from uridine 5-triphosphate), a reaction catalyzed by the N-terminal domain. This chain is Bifunctional protein GlmU, found in Anaeromyxobacter dehalogenans (strain 2CP-C).